Reading from the N-terminus, the 251-residue chain is Imidazole glycerol phosphate synthase subunit HisF (251 aa).

Residues aspartate 12 and aspartate 131 contribute to the active site.

This sequence belongs to the HisA/HisF family. Heterodimer of HisH and HisF.

It is found in the cytoplasm. It catalyses the reaction 5-[(5-phospho-1-deoxy-D-ribulos-1-ylimino)methylamino]-1-(5-phospho-beta-D-ribosyl)imidazole-4-carboxamide + L-glutamine = D-erythro-1-(imidazol-4-yl)glycerol 3-phosphate + 5-amino-1-(5-phospho-beta-D-ribosyl)imidazole-4-carboxamide + L-glutamate + H(+). It participates in amino-acid biosynthesis; L-histidine biosynthesis; L-histidine from 5-phospho-alpha-D-ribose 1-diphosphate: step 5/9. IGPS catalyzes the conversion of PRFAR and glutamine to IGP, AICAR and glutamate. The HisF subunit catalyzes the cyclization activity that produces IGP and AICAR from PRFAR using the ammonia provided by the HisH subunit. In Streptomyces griseus subsp. griseus (strain JCM 4626 / CBS 651.72 / NBRC 13350 / KCC S-0626 / ISP 5235), this protein is Imidazole glycerol phosphate synthase subunit HisF.